The chain runs to 425 residues: Proline iminopeptidase (425 aa).

The AB hydrolase-1 domain maps to 52-315 (PWLLYLQGGP…EFPALAWAQG (264 aa)). The Nucleophile role is filled by Ser-146. Asp-351 is a catalytic residue. His-404 (proton donor) is an active-site residue.

The protein belongs to the peptidase S33 family. Homotetramer.

It localises to the cytoplasm. It catalyses the reaction Release of N-terminal proline from a peptide.. In terms of biological role, higher activity toward long peptides. Acts on hydroxyproline beta-naphthylamide with almost as high an activity as on proline beta-naphthylamide. In Aeromonas sobria, this protein is Proline iminopeptidase (pip).